We begin with the raw amino-acid sequence, 439 residues long: Ribosomal protein uS12 methylthiotransferase RimO (439 aa).

Residues 7-119 form the MTTase N-terminal domain; the sequence is KQLCLISLGC…IDIMIAKKQN (113 aa). Positions 16, 50, 82, 151, 155, and 158 each coordinate [4Fe-4S] cluster. The region spanning 137–368 is the Radical SAM core domain; the sequence is TGSSVHAYVK…ALKHQNHSFK (232 aa).

It belongs to the methylthiotransferase family. RimO subfamily. The cofactor is [4Fe-4S] cluster.

The protein resides in the cytoplasm. The enzyme catalyses L-aspartate(89)-[ribosomal protein uS12]-hydrogen + (sulfur carrier)-SH + AH2 + 2 S-adenosyl-L-methionine = 3-methylsulfanyl-L-aspartate(89)-[ribosomal protein uS12]-hydrogen + (sulfur carrier)-H + 5'-deoxyadenosine + L-methionine + A + S-adenosyl-L-homocysteine + 2 H(+). Its function is as follows. Catalyzes the methylthiolation of an aspartic acid residue of ribosomal protein uS12. This is Ribosomal protein uS12 methylthiotransferase RimO from Helicobacter pylori (strain ATCC 700392 / 26695) (Campylobacter pylori).